The chain runs to 192 residues: Calcium-binding protein K (192 aa).

EF-hand domains follow at residues 60–95 (WDEASMVRMFTLFDSDGNGVIDVKEFITALYLMAKA) and 96–131 (PTLDKLGFFFDLFDSDKSGYLEREEVDKLVNIVVCC). 9 residues coordinate Ca(2+): aspartate 73, aspartate 75, asparagine 77, glutamate 84, aspartate 109, aspartate 111, serine 113, tyrosine 115, and glutamate 120.

The protein belongs to the recoverin family.

The chain is Calcium-binding protein K (cbpK) from Dictyostelium discoideum (Social amoeba).